The following is a 206-amino-acid chain: Small ribosomal subunit protein uS4 (206 aa).

Positions 18-45 are disordered; that stretch reads NIWGRPKSPVNRREYGPGQHGQRRKGKM. Residues 94–157 enclose the S4 RNA-binding domain; the sequence is RRLDAVVYRA…KQLASVLEAV (64 aa).

This sequence belongs to the universal ribosomal protein uS4 family. Part of the 30S ribosomal subunit. Contacts protein S5. The interaction surface between S4 and S5 is involved in control of translational fidelity.

Its function is as follows. One of the primary rRNA binding proteins, it binds directly to 16S rRNA where it nucleates assembly of the body of the 30S subunit. In terms of biological role, with S5 and S12 plays an important role in translational accuracy. This chain is Small ribosomal subunit protein uS4, found in Ruegeria pomeroyi (strain ATCC 700808 / DSM 15171 / DSS-3) (Silicibacter pomeroyi).